A 210-amino-acid polypeptide reads, in one-letter code: Glutathione S-transferase P 10 (210 aa).

The 80-residue stretch at 2–81 (AVPQLYYFTI…HLGRVHGLNG (80 aa)) folds into the GST N-terminal domain. Residues Tyr-8, Trp-41, Lys-45, 52-53 (QL), and 65-66 (QT) contribute to the glutathione site. One can recognise a GST C-terminal domain in the interval 83 to 200 (NEQEATFLDM…YLEKRKADKV (118 aa)).

The protein belongs to the GST superfamily. Pi family. Homodimer. In terms of tissue distribution, expressed in cells at the mouth and adjacent to the pharyngeal bulbs of the head and also in the tail.

It carries out the reaction RX + glutathione = an S-substituted glutathione + a halide anion + H(+). Its function is as follows. Conjugation of reduced glutathione to a wide number of exogenous and endogenous hydrophobic electrophiles. Responsible for approximately one-third of 4-hydroxy-2-nonenal conjugation. May play a role in the detoxification of reactive oxygen species produced during pathogenic bacterial infection. This chain is Glutathione S-transferase P 10, found in Caenorhabditis elegans.